Reading from the N-terminus, the 126-residue chain is MKGLEFVFLAAGSVLGAFLRYKITESPLIFNTLPLNVLIVNVIGAFILGVFIVLSQQWNLDGRYSLFAAIGFCGSLTTMSSFALDSSNLLENNQYGALAANIIVNVGLSIGALIGGKSLMSTIISN.

A run of 3 helical transmembrane segments spans residues 33–53 (LPLN…VFIV), 64–84 (YSLF…SFAL), and 96–116 (GALA…LIGG). Positions 74 and 77 each coordinate Na(+).

Belongs to the fluoride channel Fluc/FEX (TC 1.A.43) family.

The protein resides in the cell membrane. It catalyses the reaction fluoride(in) = fluoride(out). Na(+) is not transported, but it plays an essential structural role and its presence is essential for fluoride channel function. Fluoride-specific ion channel. Important for reducing fluoride concentration in the cell, thus reducing its toxicity. The chain is Fluoride-specific ion channel FluC from Nitrosopumilus maritimus (strain SCM1).